We begin with the raw amino-acid sequence, 151 residues long: 3-hydroxyacyl-[acyl-carrier-protein] dehydratase FabZ (151 aa).

Histidine 56 is a catalytic residue.

This sequence belongs to the thioester dehydratase family. FabZ subfamily.

It is found in the cytoplasm. The catalysed reaction is a (3R)-hydroxyacyl-[ACP] = a (2E)-enoyl-[ACP] + H2O. Its function is as follows. Involved in unsaturated fatty acids biosynthesis. Catalyzes the dehydration of short chain beta-hydroxyacyl-ACPs and long chain saturated and unsaturated beta-hydroxyacyl-ACPs. This is 3-hydroxyacyl-[acyl-carrier-protein] dehydratase FabZ from Nitrobacter winogradskyi (strain ATCC 25391 / DSM 10237 / CIP 104748 / NCIMB 11846 / Nb-255).